A 490-amino-acid chain; its full sequence is ATP-dependent 6-phosphofructokinase (490 aa).

Residues Gly-109, 175-176 (RG), and 200-203 (GDGT) each bind ATP. Asp-201 provides a ligand contact to Mg(2+). Substrate contacts are provided by residues 229-231 (TID), 274-276 (MGR), Glu-327, and 383-386 (YMIR). Residue Asp-231 is the Proton acceptor of the active site. Residues 488–490 (SKL) carry the Peroxisomal targeting signal motif.

The protein belongs to the phosphofructokinase type A (PFKA) family. PPi-dependent PFK group II subfamily. Atypical ATP-dependent clade 'X' sub-subfamily. As to quaternary structure, homotetramer. Mg(2+) is required as a cofactor.

Its subcellular location is the glycosome. It carries out the reaction beta-D-fructose 6-phosphate + ATP = beta-D-fructose 1,6-bisphosphate + ADP + H(+). Its pathway is carbohydrate degradation; glycolysis; D-glyceraldehyde 3-phosphate and glycerone phosphate from D-glucose: step 3/4. Allosterically activated by AMP. Functionally, catalyzes the phosphorylation of D-fructose 6-phosphate to fructose 1,6-bisphosphate by ATP, the first committing step of glycolysis. The polypeptide is ATP-dependent 6-phosphofructokinase (Trypanoplasma borreli).